A 228-amino-acid chain; its full sequence is Ferric nitrobindin-like protein (228 aa).

The tract at residues 1 to 21 is disordered; that stretch reads MTSDEVRDGAGSPADSSKGNK. The GXWXGXG signature appears at 75–81; sequence GVWRGEG.

The protein belongs to the nitrobindin family.

The chain is Ferric nitrobindin-like protein from Mycobacterium leprae (strain TN).